The following is a 414-amino-acid chain: 2,3-diketo-5-methylthiopentyl-1-phosphate enolase (414 aa).

Catalysis depends on K99, which acts as the Proton acceptor. Substrate-binding positions include K148, 174–177 (KDDE), H265, G338, and 360–361 (GG). Mg(2+) is bound by residues K174, D176, and E177. K174 carries the post-translational modification N6-carboxylysine.

This sequence belongs to the RuBisCO large chain family. Type IV subfamily. In terms of assembly, homodimer. The cofactor is Mg(2+).

It catalyses the reaction 5-methylsulfanyl-2,3-dioxopentyl phosphate = 2-hydroxy-5-methylsulfanyl-3-oxopent-1-enyl phosphate. Its pathway is amino-acid biosynthesis; L-methionine biosynthesis via salvage pathway; L-methionine from S-methyl-5-thio-alpha-D-ribose 1-phosphate: step 3/6. Functionally, catalyzes the enolization of 2,3-diketo-5-methylthiopentyl-1-phosphate (DK-MTP-1-P) into 2-hydroxy-3-keto-5-methylthiopentenyl-1-phosphate (HK-MTPenyl-1-P). The polypeptide is 2,3-diketo-5-methylthiopentyl-1-phosphate enolase (Bacillus cereus (strain AH820)).